Consider the following 298-residue polypeptide: Apolipoprotein E (298 aa).

A signal peptide spans 1 to 18 (MKILWAALVLTLLAGCRA). A run of 6 repeats spans residues 74–95 (LLME…KEVG), 96–117 (PMAE…ARLA), 118–139 (GDME…AMLG), 140–161 (QSSE…KRLQ), 162–183 (RDAE…EGAE), and 223–244 (GRLE…EQME). Residues 74-244 (LLMEDTMKEL…RLEEVREQME (171 aa)) form an 8 X 22 AA approximate tandem repeats region. The residue at position 137 (Met-137) is a Methionine sulfoxide. Ser-141 carries the phosphoserine modification. The interval 152 to 162 (HLRKLRKRLQR) is LDL and other lipoprotein receptors binding. Heparin is bound at residue 156-159 (LRKR). The tract at residues 204-272 (ALTSHPLRER…SWFEPMVEDL (69 aa)) is lipid-binding and lipoprotein association. 218–225 (GEQVRGRL) is a heparin binding site. Residues 260-272 (RLKSWFEPMVEDL) form a specificity for association with VLDL region.

This sequence belongs to the apolipoprotein A1/A4/E family. In terms of assembly, homotetramer. May interact with ABCA1; functionally associated with ABCA1 in the biogenesis of HDLs. May interact with APP/A4 amyloid-beta peptide; the interaction is extremely stable in vitro but its physiological significance is unclear. May interact with MAPT. May interact with MAP2. In the cerebrospinal fluid, interacts with secreted SORL1. Interacts with PMEL; this allows the loading of PMEL luminal fragment on ILVs to induce fibril nucleation. In terms of processing, APOE exists as multiple glycosylated and sialylated glycoforms within cells and in plasma. The extent of glycosylation and sialylation are tissue and context specific. Glycated in plasma VLDL. Post-translationally, phosphorylated by FAM20C in the extracellular medium.

The protein resides in the secreted. It localises to the extracellular space. The protein localises to the extracellular matrix. It is found in the extracellular vesicle. Its subcellular location is the endosome. The protein resides in the multivesicular body. In terms of biological role, APOE is an apolipoprotein, a protein associating with lipid particles, that mainly functions in lipoprotein-mediated lipid transport between organs via the plasma and interstitial fluids. APOE is a core component of plasma lipoproteins and is involved in their production, conversion and clearance. Apolipoproteins are amphipathic molecules that interact both with lipids of the lipoprotein particle core and the aqueous environment of the plasma. As such, APOE associates with chylomicrons, chylomicron remnants, very low density lipoproteins (VLDL) and intermediate density lipoproteins (IDL) but shows a preferential binding to high-density lipoproteins (HDL). It also binds a wide range of cellular receptors including the LDL receptor/LDLR, the LDL receptor-related proteins LRP1, LRP2 and LRP8 and the very low-density lipoprotein receptor/VLDLR that mediate the cellular uptake of the APOE-containing lipoprotein particles. Finally, APOE also has a heparin-binding activity and binds heparan-sulfate proteoglycans on the surface of cells, a property that supports the capture and the receptor-mediated uptake of APOE-containing lipoproteins by cells. A main function of APOE is to mediate lipoprotein clearance through the uptake of chylomicrons, VLDLs, and HDLs by hepatocytes. APOE is also involved in the biosynthesis by the liver of VLDLs as well as their uptake by peripheral tissues ensuring the delivery of triglycerides and energy storage in muscle, heart and adipose tissues. By participating in the lipoprotein-mediated distribution of lipids among tissues, APOE plays a critical role in plasma and tissues lipid homeostasis. APOE is also involved in two steps of reverse cholesterol transport, the HDLs-mediated transport of cholesterol from peripheral tissues to the liver, and thereby plays an important role in cholesterol homeostasis. First, it is functionally associated with ABCA1 in the biogenesis of HDLs in tissues. Second, it is enriched in circulating HDLs and mediates their uptake by hepatocytes. APOE also plays an important role in lipid transport in the central nervous system, regulating neuron survival and sprouting. This Hydrochoerus hydrochaeris (Capybara) protein is Apolipoprotein E (APOE).